The primary structure comprises 571 residues: Proline--tRNA ligase (571 aa).

It belongs to the class-II aminoacyl-tRNA synthetase family. ProS type 1 subfamily. Homodimer.

It localises to the cytoplasm. It carries out the reaction tRNA(Pro) + L-proline + ATP = L-prolyl-tRNA(Pro) + AMP + diphosphate. In terms of biological role, catalyzes the attachment of proline to tRNA(Pro) in a two-step reaction: proline is first activated by ATP to form Pro-AMP and then transferred to the acceptor end of tRNA(Pro). As ProRS can inadvertently accommodate and process non-cognate amino acids such as alanine and cysteine, to avoid such errors it has two additional distinct editing activities against alanine. One activity is designated as 'pretransfer' editing and involves the tRNA(Pro)-independent hydrolysis of activated Ala-AMP. The other activity is designated 'posttransfer' editing and involves deacylation of mischarged Ala-tRNA(Pro). The misacylated Cys-tRNA(Pro) is not edited by ProRS. This chain is Proline--tRNA ligase, found in Aliivibrio fischeri (strain MJ11) (Vibrio fischeri).